The following is a 201-amino-acid chain: MQPFTCHTGLAVMIDSANIDTDQIIPKQFLSKVTRDGFGVHLFHDWRYLDDAGDVPNPEFTLNKPRYNGASILLAQENFGCGSSREHAPWALADFGLRAIIAPSFADIFYGNSINNGLLPVKLSANEVRQLMDEVASEEGAQITVDLTTCQVTSPSGAQFSFSLAESARHKLLNGLDAIGLTLSHGAQISEYESQIPSWRR.

The protein belongs to the LeuD family. LeuD type 1 subfamily. Heterodimer of LeuC and LeuD.

It carries out the reaction (2R,3S)-3-isopropylmalate = (2S)-2-isopropylmalate. Its pathway is amino-acid biosynthesis; L-leucine biosynthesis; L-leucine from 3-methyl-2-oxobutanoate: step 2/4. Its function is as follows. Catalyzes the isomerization between 2-isopropylmalate and 3-isopropylmalate, via the formation of 2-isopropylmaleate. The protein is 3-isopropylmalate dehydratase small subunit of Shewanella oneidensis (strain ATCC 700550 / JCM 31522 / CIP 106686 / LMG 19005 / NCIMB 14063 / MR-1).